The chain runs to 787 residues: Aconitate hydratase, mitochondrial (787 aa).

Residues 1–33 constitute a mitochondrion transit peptide; it reads MISTRLARAGALAPKSRLFLGTRAFATVGDSPL. Substrate-binding positions include glutamine 104 and 197-199; that span reads DSH. Residues cysteine 390, cysteine 453, and cysteine 456 each contribute to the [4Fe-4S] cluster site. Positions 479 and 484 each coordinate substrate. The tract at residues 529-559 is disordered; the sequence is LQPPTGEGLPAKGYDPGRDTYQAPPADRSSV. Substrate-binding positions include arginine 612 and 675 to 676; that span reads SR.

It belongs to the aconitase/IPM isomerase family. The cofactor is [4Fe-4S] cluster.

The protein localises to the mitochondrion. It catalyses the reaction citrate = D-threo-isocitrate. The catalysed reaction is (2R)-homocitrate = cis-homoaconitate + H2O. It participates in carbohydrate metabolism; tricarboxylic acid cycle; isocitrate from oxaloacetate: step 2/2. Its pathway is amino-acid biosynthesis; L-lysine biosynthesis via AAA pathway; L-alpha-aminoadipate from 2-oxoglutarate: step 2/5. Catalyzes the isomerization of citrate to isocitrate via cis-aconitate, a step in the citric acid cycle. Also catalyzes the reversible dehydration of (R)-homocitrate to cis-homoaconitate, a step in the alpha-aminoadipate pathway for lysine biosynthesis. In Aspergillus fumigatus (strain ATCC MYA-4609 / CBS 101355 / FGSC A1100 / Af293) (Neosartorya fumigata), this protein is Aconitate hydratase, mitochondrial (acoA).